We begin with the raw amino-acid sequence, 344 residues long: Methylthioribose-1-phosphate isomerase (344 aa).

Residues 55-57, Arg-98, and Gln-202 each bind substrate; that span reads RGA. Asp-243 acts as the Proton donor in catalysis. 253 to 254 is a binding site for substrate; that stretch reads NK.

The protein belongs to the eIF-2B alpha/beta/delta subunits family. MtnA subfamily.

It carries out the reaction 5-(methylsulfanyl)-alpha-D-ribose 1-phosphate = 5-(methylsulfanyl)-D-ribulose 1-phosphate. The protein operates within amino-acid biosynthesis; L-methionine biosynthesis via salvage pathway; L-methionine from S-methyl-5-thio-alpha-D-ribose 1-phosphate: step 1/6. Functionally, catalyzes the interconversion of methylthioribose-1-phosphate (MTR-1-P) into methylthioribulose-1-phosphate (MTRu-1-P). In Gemmatimonas aurantiaca (strain DSM 14586 / JCM 11422 / NBRC 100505 / T-27), this protein is Methylthioribose-1-phosphate isomerase.